Reading from the N-terminus, the 550-residue chain is CCR4-NOT transcription complex subunit 6-like-A (550 aa).

Residues 1-148 (MPKEKYDPPD…LYQEPDGMRK (148 aa)) are required for interaction with cnot1, cnot3 and cnot7. LRR repeat units follow at residues 52-73 (HLTVLHLSDNNLSRIPPDIAKL), 75-96 (NLVYLDLSSNKLRSLPAELGNV), 98-120 (SLRELLLNNNLLRVLPFELGRLF), and 121-143 (RLQTLGLKGNPLSQDILSLYQEP). Residues 153–550 (MLDNLSVHPE…INGVHLPSRR (398 aa)) form a nuclease domain region. Residue E235 coordinates Mg(2+). The substrate site is built by E235, E271, H355, and P360. D405 lines the Mg(2+) pocket. D405 functions as the Proton donor/acceptor in the catalytic mechanism. The substrate site is built by N407, N474, and F479.

This sequence belongs to the CCR4/nocturin family. In terms of assembly, component of the CCR4-NOT complex. Mg(2+) serves as cofactor.

The protein resides in the cytoplasm. It localises to the nucleus. The enzyme catalyses Exonucleolytic cleavage of poly(A) to 5'-AMP.. Functionally, poly(A) nuclease with 3'-5' RNase activity. Catalytic component of the CCR4-NOT complex which is one of the major cellular mRNA deadenylases and is linked to various cellular processes including bulk mRNA degradation, miRNA-mediated repression, translational repression during translational initiation and general transcription regulation. Additional complex functions may be a consequence of its influence on mRNA expression. This is CCR4-NOT transcription complex subunit 6-like-A (cnot6l-a) from Xenopus laevis (African clawed frog).